Consider the following 312-residue polypeptide: Beta-ketoacyl-[acyl-carrier-protein] synthase III (312 aa).

Residues Cys112 and His237 contribute to the active site. The ACP-binding stretch occupies residues 238 to 242 (QANIR). Asn267 is a catalytic residue.

It belongs to the thiolase-like superfamily. FabH family. Homodimer.

The protein resides in the cytoplasm. The enzyme catalyses malonyl-[ACP] + acetyl-CoA + H(+) = 3-oxobutanoyl-[ACP] + CO2 + CoA. It participates in lipid metabolism; fatty acid biosynthesis. Catalyzes the condensation reaction of fatty acid synthesis by the addition to an acyl acceptor of two carbons from malonyl-ACP. Catalyzes the first condensation reaction which initiates fatty acid synthesis and may therefore play a role in governing the total rate of fatty acid production. Possesses both acetoacetyl-ACP synthase and acetyl transacylase activities. Its substrate specificity determines the biosynthesis of branched-chain and/or straight-chain of fatty acids. The protein is Beta-ketoacyl-[acyl-carrier-protein] synthase III of Listeria innocua serovar 6a (strain ATCC BAA-680 / CLIP 11262).